Reading from the N-terminus, the 379-residue chain is Homoserine O-succinyltransferase (379 aa).

One can recognise an AB hydrolase-1 domain in the interval Asn51 to Leu360. Ser157 (nucleophile) is an active-site residue. Residue Arg227 participates in substrate binding. Catalysis depends on residues Asp323 and His356. Residue Asp357 coordinates substrate.

Belongs to the AB hydrolase superfamily. MetX family. Homodimer.

It localises to the cytoplasm. It carries out the reaction L-homoserine + succinyl-CoA = O-succinyl-L-homoserine + CoA. It functions in the pathway amino-acid biosynthesis; L-methionine biosynthesis via de novo pathway; O-succinyl-L-homoserine from L-homoserine: step 1/1. Functionally, transfers a succinyl group from succinyl-CoA to L-homoserine, forming succinyl-L-homoserine. This chain is Homoserine O-succinyltransferase, found in Pseudomonas putida (strain ATCC 700007 / DSM 6899 / JCM 31910 / BCRC 17059 / LMG 24140 / F1).